We begin with the raw amino-acid sequence, 89 residues long: Elongation factor 1-beta (89 aa).

This sequence belongs to the EF-1-beta/EF-1-delta family.

Promotes the exchange of GDP for GTP in EF-1-alpha/GDP, thus allowing the regeneration of EF-1-alpha/GTP that could then be used to form the ternary complex EF-1-alpha/GTP/AAtRNA. This is Elongation factor 1-beta from Methanococcus maripaludis (strain C7 / ATCC BAA-1331).